Here is a 439-residue protein sequence, read N- to C-terminus: U1 small nuclear ribonucleoprotein 70 kDa (439 aa).

Residue T2 is modified to N-acetylthreonine. Residues 48 to 79 (FEDPRDAPPPTRAETREERMERKRREKIERRQ) are disordered. Residues 60–79 (AETREERMERKRREKIERRQ) show a composition bias toward basic and acidic residues. The required for interaction with U1 RNA stretch occupies residues 92–202 (HNDPNAQGDA…GGGLGGTRRG (111 aa)). Residues 103 to 181 (KTLFVARVNY…RRVLVDVERG (79 aa)) enclose the RRM domain. The residue at position 118 (K118) is an N6-acetyllysine. A Phosphotyrosine modification is found at Y126. Residues 187 to 439 (WRPRRLGGGL…NGYLMEAAPE (253 aa)) are disordered. A compositionally biased stretch (gly residues) spans 192 to 201 (LGGGLGGTRR). Basic and acidic residues predominate over residues 207–254 (NIRHSGRDDTSRYDERPGPSPLPHRDRDRDRERERRERSRERDKERER). Phosphoserine is present on residues S226 and S268. Positions 255 to 268 (RRSRSRDRRRRSRS) are enriched in basic residues. 2 stretches are compositionally biased toward basic and acidic residues: residues 269–286 (RDKEERRRSRERSKDKDR) and 294–310 (RSRERARRERERKEELR). S323 is subject to Phosphoserine. Over residues 346–394 (PEEKGRDRDRDRRRSHRSERERRRDRDRDRDREHKRGERGGDRGRDEAR) the composition is skewed to basic and acidic residues. A Glycyl lysine isopeptide (Lys-Gly) (interchain with G-Cter in SUMO2) cross-link involves residue K349. Positions 395–410 (GGGGGGQDNGLEGLGN) are enriched in gly residues.

In terms of assembly, component of the U1 snRNP. The U1 snRNP is composed of the U1 snRNA and the 7 core Sm proteins SNRPB, SNRPD1, SNRPD2, SNRPD3, SNRPE, SNRPF and SNRPG that assemble in a heptameric protein ring on the Sm site of the small nuclear RNA to form the core snRNP, and at least three U1 snRNP-specific proteins SNRNP70/U1-70K, SNRPA/U1-A and SNRPC/U1-C. Interacts with SCNM1. Found in a pre-mRNA splicing complex with SFRS4, SFRS5, SNRNP70, SNRPA1, SRRM1 and SRRM2. Found in a pre-mRNA exonic splicing enhancer (ESE) complex with SNRNP70, SNRPA1, SRRM1 and TRA2B/SFRS10. Interacts with dephosphorylated SFRS13A and SFPQ. Interacts with NUDT21/CPSF5, CPSF6, SCAF11, and ZRANB2. Interacts with GEMIN5. Interacts with FUS. Extensively phosphorylated on serine residues in the C-terminal region.

It localises to the nucleus speckle. The protein resides in the nucleus. Its subcellular location is the nucleoplasm. In terms of biological role, component of the spliceosomal U1 snRNP, which is essential for recognition of the pre-mRNA 5' splice-site and the subsequent assembly of the spliceosome. SNRNP70 binds to the loop I region of U1-snRNA. The chain is U1 small nuclear ribonucleoprotein 70 kDa (SNRNP70) from Bos taurus (Bovine).